The sequence spans 141 residues: Hemoglobin subunit alpha-D (141 aa).

One can recognise a Globin domain in the interval Val-1–Arg-141. Residues His-58 and His-87 each coordinate heme b.

The protein belongs to the globin family. There are three forms of hemoglobin in Sphenodon: A, A' and D. Hb A is a tetramer of two alpha-A and two beta-1, Hb A' is a tetramer of two alpha-a and two beta-2, Hb D is a tetramer of two alpha-D and two beta-2. In terms of tissue distribution, red blood cells.

Its function is as follows. Involved in oxygen transport from the lung to the various peripheral tissues. The chain is Hemoglobin subunit alpha-D (HBAD) from Sphenodon punctatus (Tuatara).